Consider the following 98-residue polypeptide: NADH-ubiquinone oxidoreductase chain 4L (98 aa).

3 helical membrane passes run 1 to 21, 25 to 45, and 59 to 81; these read MSLV…GLLM, HLMS…VMAT, and MPII…LVMV.

This sequence belongs to the complex I subunit 4L family. As to quaternary structure, core subunit of respiratory chain NADH dehydrogenase (Complex I) which is composed of 45 different subunits.

Its subcellular location is the mitochondrion inner membrane. The enzyme catalyses a ubiquinone + NADH + 5 H(+)(in) = a ubiquinol + NAD(+) + 4 H(+)(out). In terms of biological role, core subunit of the mitochondrial membrane respiratory chain NADH dehydrogenase (Complex I) which catalyzes electron transfer from NADH through the respiratory chain, using ubiquinone as an electron acceptor. Part of the enzyme membrane arm which is embedded in the lipid bilayer and involved in proton translocation. The chain is NADH-ubiquinone oxidoreductase chain 4L (MT-ND4L) from Equus caballus (Horse).